Here is a 328-residue protein sequence, read N- to C-terminus: Methionyl-tRNA formyltransferase (328 aa).

110-113 (SLLP) contacts (6S)-5,6,7,8-tetrahydrofolate.

This sequence belongs to the Fmt family.

It carries out the reaction L-methionyl-tRNA(fMet) + (6R)-10-formyltetrahydrofolate = N-formyl-L-methionyl-tRNA(fMet) + (6S)-5,6,7,8-tetrahydrofolate + H(+). Functionally, attaches a formyl group to the free amino group of methionyl-tRNA(fMet). The formyl group appears to play a dual role in the initiator identity of N-formylmethionyl-tRNA by promoting its recognition by IF2 and preventing the misappropriation of this tRNA by the elongation apparatus. This chain is Methionyl-tRNA formyltransferase, found in Prochlorococcus marinus (strain MIT 9515).